Reading from the N-terminus, the 132-residue chain is Small ribosomal subunit protein uS11 (132 aa).

It belongs to the universal ribosomal protein uS11 family. Part of the 30S ribosomal subunit. Interacts with proteins S7 and S18. Binds to IF-3.

Its function is as follows. Located on the platform of the 30S subunit, it bridges several disparate RNA helices of the 16S rRNA. Forms part of the Shine-Dalgarno cleft in the 70S ribosome. In Chlamydia trachomatis serovar L2 (strain ATCC VR-902B / DSM 19102 / 434/Bu), this protein is Small ribosomal subunit protein uS11.